The chain runs to 347 residues: MDLQAQLEELKTKTLETLQSLTGNHTKELQDLRVAVLGKKGSLTELLKGLKDLSNDLRPVVGKQVNEVRDLLTKAFEEQAKIVEAAKIQAQLDAESIDVTLPGRQMTLGHRHVLTQTSEEIEDIFLGMGFQIVDGFEVEKDYYNFERMNLPKDHPARDMQDTFYITEEILLRTHTSPVQARTLDQHDFSKGPLKMVSPGRVFRRDTDDATHSHQFHQIEGLVVGKNISMRDLKGTLEMIIKKMFGEERSIRLRPSYFPFTEPSVEVDVSCFKCGGKGCNVCKKTGWIEILGAGMVHPSVLEMSGVDAKEYSGFAFGLGQERIAMLRYGINDIRGFYQGDQRFSEQFN.

Residue glutamate 261 coordinates Mg(2+).

The protein belongs to the class-II aminoacyl-tRNA synthetase family. Phe-tRNA synthetase alpha subunit type 1 subfamily. As to quaternary structure, tetramer of two alpha and two beta subunits. The cofactor is Mg(2+).

It is found in the cytoplasm. The enzyme catalyses tRNA(Phe) + L-phenylalanine + ATP = L-phenylalanyl-tRNA(Phe) + AMP + diphosphate + H(+). This is Phenylalanine--tRNA ligase alpha subunit from Streptococcus pyogenes serotype M18 (strain MGAS8232).